A 777-amino-acid chain; its full sequence is Aminopeptidase P (777 aa).

Residues methionine 1–histidine 17 form the signal peptide. Residue histidine 551 coordinates substrate. Mn(2+) is bound by residues aspartate 570 and aspartate 581. Residue histidine 640 participates in substrate binding. Mn(2+) is bound at residue histidine 644. Histidine 653 provides a ligand contact to substrate. 2 residues coordinate Mn(2+): glutamate 676 and glutamate 690.

The protein belongs to the peptidase M24B family. Homodimer. It depends on Mn(2+) as a cofactor. The N-terminus may be proteolytically cleaved to generate a 73-kDa mature form.

It is found in the vacuole lumen. Its subcellular location is the cytoplasm. The enzyme catalyses Release of any N-terminal amino acid, including proline, that is linked to proline, even from a dipeptide or tripeptide.. With respect to regulation, partially activated by Co(2+) and Mg(2+) has no effect. Inhibited by 1 mM Zn(2+), Ni(2+), or Cu(2+). Inhibited by apstatin, a non-hydrolysable peptide analog. In terms of biological role, catalyzes the removal of a penultimate prolyl residue from the N-termini of peptides. In the food vacuole, involved in the final step of host hemoglobin catabolism, by cleaving hemoglobin-derived oligopeptides. In the cytoplasm, may be involved in the last steps of the turnover of ubiquitinated proteins. This Plasmodium falciparum (isolate 3D7) protein is Aminopeptidase P.